A 297-amino-acid polypeptide reads, in one-letter code: Putative S-adenosyl-L-methionine-dependent methyltransferase Mmcs_1044 (297 aa).

S-adenosyl-L-methionine-binding positions include Asp-124 and 153–154; that span reads DL.

Belongs to the UPF0677 family.

Its function is as follows. Exhibits S-adenosyl-L-methionine-dependent methyltransferase activity. The protein is Putative S-adenosyl-L-methionine-dependent methyltransferase Mmcs_1044 of Mycobacterium sp. (strain MCS).